A 68-amino-acid polypeptide reads, in one-letter code: Conotoxin phi-MiXXVIIB (68 aa).

The N-terminal stretch at 1-29 (MRFFFLLLTVALFLTSITGDDAERMLGMK) is a signal peptide. Residues 30 to 35 (EGGYVR) constitute a propeptide that is removed on maturation. Disulfide bonds link cysteine 38-cysteine 49, cysteine 42-cysteine 51, cysteine 45-cysteine 56, and cysteine 50-cysteine 61. Proline 44 is modified (4-hydroxyproline).

This sequence belongs to the conotoxin G2 superfamily. 1 family. Expressed by the venom duct.

Its subcellular location is the secreted. In terms of biological role, this peptide promotes cell proliferation (EC(50)=17.85 uM) and inhibits apoptosis (EC(50)=2.2 uM). In Conus miles (Soldier cone), this protein is Conotoxin phi-MiXXVIIB.